Consider the following 197-residue polypeptide: Rac-like GTP-binding protein ARAC6 (197 aa).

13–20 is a binding site for GTP; the sequence is GDGAVGKT. Positions 35–43 match the Effector region motif; it reads YVPTVFDNF. Residues 60-64 and 118-121 each bind GTP; these read DTAGQ and TKLD. GDP is bound at residue Ser160. Cys194 carries the post-translational modification Cysteine methyl ester. Residue Cys194 is the site of S-geranylgeranyl cysteine attachment. Residues 195–197 constitute a propeptide, removed in mature form; that stretch reads SIL.

This sequence belongs to the small GTPase superfamily. Rho family. Interacts with SPK1. Ubiquitous. Preferentially expressed in mature pollen and pollen tubes.

The protein localises to the cytoplasm. It localises to the membrane. May be involved in cell polarity control during the actin-dependent tip growth of pollen tubes. In terms of biological role, inactive GDP-bound Rho GTPases reside in the cytosol, are found in a complex with Rho GDP-dissociation inhibitors (Rho GDIs), and are released from the GDI protein in order to translocate to membranes upon activation. This is Rac-like GTP-binding protein ARAC6 (ARAC6) from Arabidopsis thaliana (Mouse-ear cress).